We begin with the raw amino-acid sequence, 85 residues long: Large ribosomal subunit protein bL31B (85 aa).

Belongs to the bacterial ribosomal protein bL31 family. Type B subfamily. As to quaternary structure, part of the 50S ribosomal subunit.

The sequence is that of Large ribosomal subunit protein bL31B from Serratia proteamaculans (strain 568).